A 184-amino-acid polypeptide reads, in one-letter code: Gremlin-1 (184 aa).

Positions 1-24 (MNRTAYTVGALLLLLGTLLPAAEG) are cleaved as a signal peptide. 2 N-linked (GlcNAc...) asparagine glycosylation sites follow: Asn2 and Asn42. A disordered region spans residues 24-78 (GKKKGSQGAIPPPDKAQHNDSEQTQSPPQPGSRTRGRGQGRGTAMPGEEVLESSQ). 4 disulfides stabilise this stretch: Cys94-Cys144, Cys108-Cys158, Cys118-Cys176, and Cys122-Cys178. The 91-residue stretch at 94–184 (CKTQPLKQTI…QCRCISIDLD (91 aa)) folds into the CTCK domain.

It belongs to the DAN family. In terms of assembly, homodimer; can also form homooligomers. Interacts with BMP2; can form higher oligomers with BMP2. Interacts with SLIT1 and SLIT2 in a glycosylation-dependent manner. In terms of tissue distribution, highly expressed in the brain, kidney, spleen, and testis and weakly expressed in the lung and liver. Predominantly expressed in differentiated cells as neurons in brain, type I cells in lung and globlet cells in intestine.

The protein localises to the secreted. In terms of biological role, cytokine that may play an important role during carcinogenesis and metanephric kidney organogenesis, as a BMP antagonist required for early limb outgrowth and patterning in maintaining the FGF4-SHH feedback loop. Down-regulates the BMP4 signaling in a dose-dependent manner. Antagonist of BMP2; inhibits BMP2-mediated differentiation of osteoblasts (in vitro). Acts as inhibitor of monocyte chemotaxis. Can inhibit the growth or viability of normal cells but not transformed cells when is overexpressed. This chain is Gremlin-1 (Grem1), found in Rattus norvegicus (Rat).